The following is a 514-amino-acid chain: 2-isopropylmalate synthase (514 aa).

The region spanning Leu5 to Val268 is the Pyruvate carboxyltransferase domain. Mn(2+) contacts are provided by Asp14, His202, His204, and Asn239. Positions Lys395–Ser514 are regulatory domain.

Belongs to the alpha-IPM synthase/homocitrate synthase family. LeuA type 1 subfamily. Homodimer. Mn(2+) serves as cofactor.

The protein localises to the cytoplasm. The enzyme catalyses 3-methyl-2-oxobutanoate + acetyl-CoA + H2O = (2S)-2-isopropylmalate + CoA + H(+). Its pathway is amino-acid biosynthesis; L-leucine biosynthesis; L-leucine from 3-methyl-2-oxobutanoate: step 1/4. Functionally, catalyzes the condensation of the acetyl group of acetyl-CoA with 3-methyl-2-oxobutanoate (2-ketoisovalerate) to form 3-carboxy-3-hydroxy-4-methylpentanoate (2-isopropylmalate). In Burkholderia cenocepacia (strain ATCC BAA-245 / DSM 16553 / LMG 16656 / NCTC 13227 / J2315 / CF5610) (Burkholderia cepacia (strain J2315)), this protein is 2-isopropylmalate synthase.